The chain runs to 461 residues: Cysteine--tRNA ligase (461 aa).

Cys28 contacts Zn(2+). Positions 30-40 (ITVYDLCHIGH) match the 'HIGH' region motif. Zn(2+) is bound by residues Cys209, His234, and Glu238. Residues 266–270 (KMSKS) carry the 'KMSKS' region motif. Residue Lys269 coordinates ATP.

Belongs to the class-I aminoacyl-tRNA synthetase family. In terms of assembly, monomer. Zn(2+) is required as a cofactor.

It is found in the cytoplasm. The enzyme catalyses tRNA(Cys) + L-cysteine + ATP = L-cysteinyl-tRNA(Cys) + AMP + diphosphate. In Escherichia coli O157:H7, this protein is Cysteine--tRNA ligase.